The sequence spans 384 residues: 5-amino-6-(D-ribitylamino)uracil--L-tyrosine 4-hydroxyphenyl transferase 2 (384 aa).

The Radical SAM core domain occupies 53-286; sequence VSYVVNRNIY…IAISRVILHT (234 aa). Cysteine 67, cysteine 71, and cysteine 74 together coordinate [4Fe-4S] cluster.

It belongs to the radical SAM superfamily. CofH family. As to quaternary structure, consists of two subunits, CofG and CofH. It depends on [4Fe-4S] cluster as a cofactor.

It catalyses the reaction 5-amino-6-(D-ribitylamino)uracil + L-tyrosine + S-adenosyl-L-methionine = 5-amino-5-(4-hydroxybenzyl)-6-(D-ribitylimino)-5,6-dihydrouracil + 2-iminoacetate + 5'-deoxyadenosine + L-methionine + H(+). It participates in cofactor biosynthesis; coenzyme F0 biosynthesis. Functionally, catalyzes the radical-mediated synthesis of 5-amino-5-(4-hydroxybenzyl)-6-(D-ribitylimino)-5,6-dihydrouracil from 5-amino-6-(D-ribitylamino)uracil and L-tyrosine. The protein is 5-amino-6-(D-ribitylamino)uracil--L-tyrosine 4-hydroxyphenyl transferase 2 of Methanosarcina barkeri (strain Fusaro / DSM 804).